The sequence spans 224 residues: Extracellular protease inhibitor 10 (224 aa).

An N-terminal signal peptide occupies residues 1–22 (MKSAFTLSLALVAVTATISAAA). Kazal-like domains follow at residues 23–72 (DDNC…ECAS), 90–127 (TSGT…AKCK), and 156–210 (GYQG…PCPS). N25 is a glycosylation site (N-linked (GlcNAc...) asparagine). Intrachain disulfides connect C26–C56, C30–C49, and C38–C70. The interval 69–92 (ECASTPASSATPSPVTSSTGSTSG) is disordered. Low complexity predominate over residues 71–92 (ASTPASSATPSPVTSSTGSTSG). Disulfide bonds link C96–C126, C100–C119, C162–C193, C167–C186, and C175–C208. A glycan (N-linked (GlcNAc...) asparagine) is linked at N199. Residues 202 to 224 (MVGEGPCPSQEQQQQQQQQQQKL) form a disordered region. The segment covering 211–224 (QEQQQQQQQQQQKL) has biased composition (low complexity).

As to quaternary structure, interacts with host subtilisin-like protease P69B.

It localises to the secreted. Secreted effector that interacts with and inhibits the pathogenesis-related P69B subtilisin-like serine protease of host tomato. Inhibition of host proteases by a pathogen extracellular protease inhibitor forms a specific type of defense-counterdefense mechanism between plants and microbial pathogens. In Phytophthora infestans (Potato late blight agent), this protein is Extracellular protease inhibitor 10.